Reading from the N-terminus, the 517-residue chain is Crotonobetaine/carnitine--CoA ligase (517 aa).

It belongs to the ATP-dependent AMP-binding enzyme family.

The catalysed reaction is 4-(trimethylamino)butanoate + ATP + CoA = 4-(trimethylamino)butanoyl-CoA + AMP + diphosphate. The enzyme catalyses crotonobetaine + ATP + CoA = crotonobetainyl-CoA + AMP + diphosphate. It catalyses the reaction (R)-carnitine + ATP + CoA = (R)-carnitinyl-CoA + AMP + diphosphate. It functions in the pathway amine and polyamine metabolism; carnitine metabolism. In terms of biological role, catalyzes the transfer of CoA to carnitine, generating the initial carnitinyl-CoA needed for the CaiB reaction cycle. Also has activity toward crotonobetaine and gamma-butyrobetaine. This Citrobacter koseri (strain ATCC BAA-895 / CDC 4225-83 / SGSC4696) protein is Crotonobetaine/carnitine--CoA ligase.